Here is a 306-residue protein sequence, read N- to C-terminus: Dermonecrotic toxin LiSicTox-alphaIA1bi (306 aa).

An N-terminal signal peptide occupies residues 1–18 (MLPYIVLVLGCWSVLSQA). A propeptide spanning residues 19–26 (AQTDDEER) is cleaved from the precursor. Residue His38 is part of the active site. 2 residues coordinate Mg(2+): Glu58 and Asp60. His74 acts as the Nucleophile in catalysis. Intrachain disulfides connect Cys78/Cys84 and Cys80/Cys223. Asp118 lines the Mg(2+) pocket.

It belongs to the arthropod phospholipase D family. Class II subfamily. Class IIa sub-subfamily. It depends on Mg(2+) as a cofactor. Expressed by the venom gland.

It is found in the secreted. The catalysed reaction is an N-(acyl)-sphingosylphosphocholine = an N-(acyl)-sphingosyl-1,3-cyclic phosphate + choline. It carries out the reaction an N-(acyl)-sphingosylphosphoethanolamine = an N-(acyl)-sphingosyl-1,3-cyclic phosphate + ethanolamine. It catalyses the reaction a 1-acyl-sn-glycero-3-phosphocholine = a 1-acyl-sn-glycero-2,3-cyclic phosphate + choline. The enzyme catalyses a 1-acyl-sn-glycero-3-phosphoethanolamine = a 1-acyl-sn-glycero-2,3-cyclic phosphate + ethanolamine. Dermonecrotic toxins cleave the phosphodiester linkage between the phosphate and headgroup of certain phospholipids (sphingolipid and lysolipid substrates), forming an alcohol (often choline) and a cyclic phosphate. This toxin acts on sphingomyelin (SM). The level of enzymatic activity is high according to Tambourgi and colleagues or low according to Felicori and colleagues. It may also act on ceramide phosphoethanolamine (CPE), lysophosphatidylcholine (LPC) and lysophosphatidylethanolamine (LPE), but not on lysophosphatidylserine (LPS), and lysophosphatidylglycerol (LPG). It acts by transphosphatidylation, releasing exclusively cyclic phosphate products as second products. It induces complement-dependent hemolysis, dermonecrosis, vascular permeability and platelet aggregation. Both C5a and the membrane attack complex may play a role in the induction of dermonecrosis. MMP-9 and MMP-2 produced by skin fibroblasts can also contribute to proteolytic tissue destruction. The polypeptide is Dermonecrotic toxin LiSicTox-alphaIA1bi (Loxosceles intermedia (Brown spider)).